Consider the following 588-residue polypeptide: Disabled homolog 1 (588 aa).

The disordered stretch occupies residues 1-26 (MSTETELQVAVKTSAKKDSRKKGQDR). The segment covering 15 to 26 (AKKDSRKKGQDR) has biased composition (basic and acidic residues). In terms of domain architecture, PID spans 36–189 (KGEGVRYKAK…CEQAVYQTIL (154 aa)). A phosphotyrosine mark is found at Tyr-198, Tyr-220, and Tyr-232. Disordered stretches follow at residues 417–443 (LTPL…RQKM), 451–470 (FQMA…PSLT), and 502–588 (LTPV…QAGS). Positions 424–436 (PGTSDSTRSSPQT) are enriched in polar residues. Low complexity-rich tracts occupy residues 503-512 (TPVTSTTPST) and 520-534 (PRQS…SHAS). Residue Ser-524 is modified to Phosphoserine; by CDK5. Residues 537–546 (TTDDIFEEGF) are compositionally biased toward acidic residues.

As to quaternary structure, associates with the SH2 domains of SRC, FYN and ABL. Interacts (phosphorylated on tyrosine residues) with CRK and CRKL (via respective SH2 domain). Interacts with SIAH1, LRP8 and VLDLR. Interacts with LRP1. Interacts with APLP1 (via NPXY motif). Interacts with DAB2IP. Interacts with ZSWIM8. Phosphorylated by FYN on Tyr-198 and Tyr-220 upon reelin induction in embryonic neurons. Also phosphorylated on Ser-524 independently of reelin signaling. In terms of processing, ubiquitinated by various cullin-5-RING E3 ubiquitin-protein ligase complexes (ECS complexes) following ligand-binding and phosphorylation, leading to its degradation. Ubiquitinated by the ECS(SOCS7) complex in the cortical plate of the developing cerebral cortex following ligand-binding and phosphorylation by FYN, leading to its degradation by the proteasome. Recognized by ZSWIM8 through a disorder targets misorder mechanism that eliminates misfolded DAB1 via ubiquitination and proteasomal degradation. As to expression, mainly expressed in brain.

It localises to the cytoplasm. Its function is as follows. Signaling adapter of the reelin-mediated signaling pathway, which regulates the migration and differentiation of postmitotic neurons during brain development. Mediates intracellular transduction of Reelin signaling following reelin (RELN)-binding to its receptor: acts by docking proteins through its phosphotyrosine residues and PID domain. This Homo sapiens (Human) protein is Disabled homolog 1 (DAB1).